Reading from the N-terminus, the 80-residue chain is Cytochrome c oxidase subunit 7B, mitochondrial (80 aa).

The transit peptide at 1–24 (MLPLAKNALSRLQVRSIQQVVARQ) directs the protein to the mitochondrion. At 25–39 (SHQKRAPSFHDKYGN) the chain is on the mitochondrial matrix side. Residues 40–60 (AILAGGAIFCVSTWTYTATQI) traverse the membrane as a helical segment. At 61-80 (GIEWNMSPVGRVTPKEWRDQ) the chain is on the mitochondrial intermembrane side.

Belongs to the cytochrome c oxidase VIIb family. In terms of assembly, component of the cytochrome c oxidase (complex IV, CIV), a multisubunit enzyme composed of 14 subunits. The complex is composed of a catalytic core of 3 subunits MT-CO1, MT-CO2 and MT-CO3, encoded in the mitochondrial DNA, and 11 supernumerary subunits COX4I, COX5A, COX5B, COX6A, COX6B, COX6C, COX7A, COX7B, COX7C, COX8 and NDUFA4, which are encoded in the nuclear genome. The complex exists as a monomer or a dimer and forms supercomplexes (SCs) in the inner mitochondrial membrane with NADH-ubiquinone oxidoreductase (complex I, CI) and ubiquinol-cytochrome c oxidoreductase (cytochrome b-c1 complex, complex III, CIII), resulting in different assemblies (supercomplex SCI(1)III(2)IV(1) and megacomplex MCI(2)III(2)IV(2)).

Its subcellular location is the mitochondrion inner membrane. Its pathway is energy metabolism; oxidative phosphorylation. Its function is as follows. Component of the cytochrome c oxidase, the last enzyme in the mitochondrial electron transport chain which drives oxidative phosphorylation. The respiratory chain contains 3 multisubunit complexes succinate dehydrogenase (complex II, CII), ubiquinol-cytochrome c oxidoreductase (cytochrome b-c1 complex, complex III, CIII) and cytochrome c oxidase (complex IV, CIV), that cooperate to transfer electrons derived from NADH and succinate to molecular oxygen, creating an electrochemical gradient over the inner membrane that drives transmembrane transport and the ATP synthase. Cytochrome c oxidase is the component of the respiratory chain that catalyzes the reduction of oxygen to water. Electrons originating from reduced cytochrome c in the intermembrane space (IMS) are transferred via the dinuclear copper A center (CU(A)) of subunit 2 and heme A of subunit 1 to the active site in subunit 1, a binuclear center (BNC) formed by heme A3 and copper B (CU(B)). The BNC reduces molecular oxygen to 2 water molecules using 4 electrons from cytochrome c in the IMS and 4 protons from the mitochondrial matrix. Plays a role in proper central nervous system (CNS) development in vertebrates. The sequence is that of Cytochrome c oxidase subunit 7B, mitochondrial (Cox7b) from Mus musculus (Mouse).